The sequence spans 261 residues: uncharacterized protein (261 aa).

NADP(+) contacts are provided by Ile33, Lys60, Asp78, and Asn105. Residue Ser157 is the Proton donor of the active site. Positions 172, 176, and 206 each coordinate NADP(+). Tyr172 serves as the catalytic Proton acceptor. The Lowers pKa of active site Tyr role is filled by Lys176.

Belongs to the short-chain dehydrogenases/reductases (SDR) family.

It localises to the cytoplasm. Its subcellular location is the nucleus. This is an uncharacterized protein from Schizosaccharomyces pombe (strain 972 / ATCC 24843) (Fission yeast).